The following is a 347-amino-acid chain: MNPLILIILLTTLILGTMMVVTSSHWLLAWIGFEMNMMAFIPIMMKNPTPRATEASTKYLLTQATASALLMMAVIINLMHSGQWTITKLFNPTASTLMTVALAIKLGLAPFHFWVPEVTQGIPLTTGLILLTWQKLAPLSILYQISPSINLHLMLIMSLLSILMGGWGGLNQTQLRKIMAYSSIAHMGWMTAILLYNPTLTLLNLLIYITMTFTMFMLFIQNSTTTTLSLSQTWNKMPVITTLTMLTLLSMGGLPPLSGFMPKWMIIQELTKNDMLIVPTFMAITALLNLYFYMRLTYSTALTLFPSTNNMKMKWQFNSTKRTPLLPTAIVISTMLLPLTPMLSILL.

11 helical membrane passes run 1 to 21, 25 to 45, 59 to 79, 96 to 116, 122 to 142, 149 to 169, 178 to 198, 200 to 220, 237 to 257, 274 to 294, and 325 to 345; these read MNPLILIILLTTLILGTMMVV, HWLLAWIGFEMNMMAFIPIMM, YLLTQATASALLMMAVIINLM, TLMTVALAIKLGLAPFHFWVP, IPLTTGLILLTWQKLAPLSIL, INLHLMLIMSLLSILMGGWGG, IMAYSSIAHMGWMTAILLYNP, LTLLNLLIYITMTFTMFMLFI, MPVITTLTMLTLLSMGGLPPL, DMLIVPTFMAITALLNLYFYM, and LLPTAIVISTMLLPLTPMLSI.

Belongs to the complex I subunit 2 family. As to quaternary structure, core subunit of respiratory chain NADH dehydrogenase (Complex I) which is composed of 45 different subunits. Interacts with TMEM242.

It localises to the mitochondrion inner membrane. The enzyme catalyses a ubiquinone + NADH + 5 H(+)(in) = a ubiquinol + NAD(+) + 4 H(+)(out). Core subunit of the mitochondrial membrane respiratory chain NADH dehydrogenase (Complex I) which catalyzes electron transfer from NADH through the respiratory chain, using ubiquinone as an electron acceptor. Essential for the catalytic activity and assembly of complex I. This is NADH-ubiquinone oxidoreductase chain 2 from Balaenoptera physalus (Fin whale).